We begin with the raw amino-acid sequence, 391 residues long: GDP-mannose transporter (391 aa).

Basic and acidic residues predominate over residues 1–11 (MDDKKNEDVEM). Positions 1–28 (MDDKKNEDVEMRNFNGRSSPSQRDPFIS) are disordered. The Cytoplasmic segment spans residues 1–44 (MDDKKNEDVEMRNFNGRSSPSQRDPFISKPGAAKRGGSSFDLSN). A helical transmembrane segment spans residues 45–65 (VTNSPGISILAYCLASISMTV). At 66–75 (TNKYCVSGSN) the chain is on the lumenal side. Residues 76–96 (WNLNFFYLAIQSVVCIIAIII) form a helical membrane-spanning segment. Residues 97–115 (CKQAGLITNLAPFDTKKAK) lie on the Cytoplasmic side of the membrane. Residues 116-138 (TWFPISLLLVGMIYTSTKALQFL) traverse the membrane as a helical segment. Residues 139–141 (SVP) lie on the Lumenal side of the membrane. The helical transmembrane segment at 142–164 (VYTIFKNLTIIVIAYGEVLWFGG) threads the bilayer. Over 165-170 (SVTPSA) the chain is Cytoplasmic. Residues 171 to 193 (LFSFGLMVLSSVVAAWADIQHAL) traverse the membrane as a helical segment. Topologically, residues 194-209 (YGGGATQTKEAADALS) are lumenal. Residues 210–230 (TLNAGYAWMGMNVFCTAAYVL) traverse the membrane as a helical segment. Residues 231–245 (SMRKVIKKMNFKDWD) lie on the Cytoplasmic side of the membrane. Residues 246-266 (TMFYNNLLTIPVLFVCSFVFE) form a helical membrane-spanning segment. 2 N-linked (GlcNAc...) asparagine glycosylation sites follow: asparagine 267 and asparagine 272. At 267–284 (NWSSENLTKNFPLETRNN) the chain is on the lumenal side. Residues 285–305 (LILGMIYSGLATIFISYCSAW) form a helical membrane-spanning segment. At 306–313 (CIRVTSST) the chain is on the cytoplasmic side. Residues 314–336 (TYSMVGALNKLPIAVSGLVFFAA) form a helical membrane-spanning segment. Residues 337–339 (PVT) lie on the Lumenal side of the membrane. A helical membrane pass occupies residues 340–359 (FGSVSAIFIGFVSGIVYAWA). Residues 360-391 (KVRQNQSKGSVLPTTQPVMSASSQSNRDAAKA) lie on the Cytoplasmic side of the membrane. The tract at residues 369-391 (SVLPTTQPVMSASSQSNRDAAKA) is disordered.

It belongs to the TPT transporter family. SLC35D subfamily. Homooligomer.

It localises to the golgi apparatus membrane. Its subcellular location is the cytoplasmic vesicle membrane. It is found in the endoplasmic reticulum membrane. Functionally, involved in the import of GDP-mannose from the cytoplasm into the Golgi lumen. The sequence is that of GDP-mannose transporter (vrg4) from Sclerotinia sclerotiorum (strain ATCC 18683 / 1980 / Ss-1) (White mold).